A 240-amino-acid chain; its full sequence is Uridylate kinase (240 aa).

13-16 lines the ATP pocket; it reads KLSG. The tract at residues 21-26 is involved in allosteric activation by GTP; the sequence is GEKGFG. Position 55 (Gly-55) interacts with UMP. The ATP site is built by Gly-56 and Arg-60. UMP contacts are provided by residues Asp-75 and 136-143; that span reads IGNPYFST. ATP is bound by residues Asn-164, Tyr-170, and Asp-173.

The protein belongs to the UMP kinase family. Homohexamer.

The protein localises to the cytoplasm. It catalyses the reaction UMP + ATP = UDP + ADP. Its pathway is pyrimidine metabolism; CTP biosynthesis via de novo pathway; UDP from UMP (UMPK route): step 1/1. With respect to regulation, allosterically activated by GTP. Inhibited by UTP. Functionally, catalyzes the reversible phosphorylation of UMP to UDP. This is Uridylate kinase from Staphylococcus aureus (strain Newman).